The chain runs to 184 residues: GMP synthase [glutamine-hydrolyzing] subunit A (184 aa).

Positions 3-184 constitute a Glutamine amidotransferase type-1 domain; sequence RIVVVDNHGQ…ENFRDICAGD (182 aa). Cysteine 73 functions as the Nucleophile in the catalytic mechanism. Catalysis depends on residues histidine 161 and glutamate 163.

In terms of assembly, heterodimer composed of a glutamine amidotransferase subunit (A) and a GMP-binding subunit (B).

The catalysed reaction is XMP + L-glutamine + ATP + H2O = GMP + L-glutamate + AMP + diphosphate + 2 H(+). It participates in purine metabolism; GMP biosynthesis; GMP from XMP (L-Gln route): step 1/1. Catalyzes the synthesis of GMP from XMP. This is GMP synthase [glutamine-hydrolyzing] subunit A from Natronomonas pharaonis (strain ATCC 35678 / DSM 2160 / CIP 103997 / JCM 8858 / NBRC 14720 / NCIMB 2260 / Gabara) (Halobacterium pharaonis).